Consider the following 322-residue polypeptide: uncharacterized protein (322 aa).

A coiled-coil region spans residues 205–286; the sequence is QEIKNAHAAL…LKKAISEAVQ (82 aa). Composition is skewed to basic and acidic residues over residues 254–281 and 290–299; these read EKEEELNKKDKEKEEETEKEGEKLKKAI and DRIEAIEKSR. A disordered region spans residues 254–322; that stretch reads EKEEELNKKD…VQKSIWSGLF (69 aa). Positions 310–322 are enriched in polar residues; the sequence is SEQVQKSIWSGLF.

It to B.subtilis XkdF.

This is an uncharacterized protein from Bacillus subtilis (strain 168).